A 355-amino-acid polypeptide reads, in one-letter code: Serpentine receptor class epsilon-1 (355 aa).

The next 7 helical transmembrane spans lie at 28–48 (FELL…YATI), 56–76 (LNFI…GRFI), 102–122 (ILSS…SLAV), 144–164 (ISLF…IVML), 172–192 (VMAF…LVLF), 232–252 (VVLF…MYMS), and 268–288 (FAFN…IIFS).

This sequence belongs to the nematode receptor-like protein sre family.

Its subcellular location is the membrane. In Caenorhabditis elegans, this protein is Serpentine receptor class epsilon-1 (sre-1).